Consider the following 225-residue polypeptide: NAD(P)H-quinone oxidoreductase subunit K, chloroplastic (225 aa).

4 residues coordinate [4Fe-4S] cluster: cysteine 43, cysteine 44, cysteine 108, and cysteine 139.

It belongs to the complex I 20 kDa subunit family. In terms of assembly, NDH is composed of at least 16 different subunits, 5 of which are encoded in the nucleus. Requires [4Fe-4S] cluster as cofactor.

It localises to the plastid. The protein localises to the chloroplast thylakoid membrane. It catalyses the reaction a plastoquinone + NADH + (n+1) H(+)(in) = a plastoquinol + NAD(+) + n H(+)(out). The enzyme catalyses a plastoquinone + NADPH + (n+1) H(+)(in) = a plastoquinol + NADP(+) + n H(+)(out). NDH shuttles electrons from NAD(P)H:plastoquinone, via FMN and iron-sulfur (Fe-S) centers, to quinones in the photosynthetic chain and possibly in a chloroplast respiratory chain. The immediate electron acceptor for the enzyme in this species is believed to be plastoquinone. Couples the redox reaction to proton translocation, and thus conserves the redox energy in a proton gradient. This chain is NAD(P)H-quinone oxidoreductase subunit K, chloroplastic, found in Vitis vinifera (Grape).